Consider the following 546-residue polypeptide: Medium-chain-fatty-acid--CoA ligase (546 aa).

Thr-185 lines the Mg(2+) pocket. Residues Trp-235 and Thr-329 each contribute to the ATP site. A Mg(2+)-binding site is contributed by Glu-330. Residues Asp-417, Lys-434, Lys-438, and Trp-443 each coordinate ATP.

The protein belongs to the ATP-dependent AMP-binding enzyme family.

The protein resides in the cytoplasm. The catalysed reaction is a medium-chain fatty acid + ATP + CoA = a medium-chain fatty acyl-CoA + AMP + diphosphate. It participates in lipid metabolism; fatty acid metabolism. This chain is Medium-chain-fatty-acid--CoA ligase, found in Ectopseudomonas oleovorans (Pseudomonas oleovorans).